The sequence spans 68 residues: Large ribosomal subunit protein uL29 (68 aa).

The protein belongs to the universal ribosomal protein uL29 family.

The protein is Large ribosomal subunit protein uL29 (rpl29) of Pyrococcus horikoshii (strain ATCC 700860 / DSM 12428 / JCM 9974 / NBRC 100139 / OT-3).